We begin with the raw amino-acid sequence, 707 residues long: Mitochondrial disaggregase (707 aa).

Residues 1–36 (MLGSLVLRRKALAPRLLLRLLRSPTLRGHGGASGRN) constitute a mitochondrion transit peptide. The interval 92–126 (PGPEETLPGQDSWNGVPSRAGLGMCALAAALVVHC) is autoinhibitory. ANK repeat units lie at residues 133 to 162 (NKDA…DVNA), 166 to 195 (LGWT…DPNL), 265 to 295 (KGCT…PLQR), and 298 to 327 (MGHT…EKQR). Residues His346, Ile348, Ser383, Gly384, Ile385, Gly386, Lys387, Thr388, Glu455, and Asn496 each coordinate ATP. A regulatory; slows ATPase and disaggregase activities region spans residues 507–535 (LQLRQEALEMSRNRIAENLGDVQISDKIT). Arg561 contacts ATP. The residue at position 589 (Lys589) is an N6-acetyllysine. An ATP-binding site is contributed by Arg620.

It belongs to the ClpA/ClpB family. Homododecamer when substrate-bound; the homododecamer consists of 2 homohexamers stacked head-to-head via ANK repeat-mediated interactions. The active substrate-bound form is likely to exist in a dynamic equilibrium between homohexamers and homododecamers. Homotetradecamer in the unbound state which is remodeled upon substrate binding into the homododecamer. Interacts with PHB and PHB2. Interacts with MAVS; the interaction is enhanced by Sendai virus infection. In terms of processing, proteolytically cleaved by protease PARL. ATP-dependent protein disaggregase activity is stimulated by PARL-mediated cleavage of the N-terminal autoinhibitory peptide. Widely expressed (at protein level). Expressed in fetal, as well as in adult tissues, with highest levels in adult brain, including thalamus, hippocampus, occipital cortex and parietal cortex. Low expression in granulocytes.

The protein localises to the mitochondrion intermembrane space. The catalysed reaction is ATP + H2O = ADP + phosphate + H(+). With respect to regulation, disaggregase activity is inhibited by ADP. Its function is as follows. Functions as a regulatory ATPase and participates in secretion/protein trafficking process. Has ATP-dependent protein disaggregase activity and is required to maintain the solubility of key mitochondrial proteins. Involved in mitochondrial-mediated antiviral innate immunity, activates RIG-I-mediated signal transduction and production of IFNB1 and pro-inflammatory cytokine IL6. Plays a role in granulocyte differentiation. The protein is Mitochondrial disaggregase of Homo sapiens (Human).